We begin with the raw amino-acid sequence, 168 residues long: Acetone carboxylase gamma subunit (168 aa).

Heterohexamer of two alpha, two beta and two gamma subunits. It depends on Fe cation as a cofactor. Mg(2+) serves as cofactor. Zn(2+) is required as a cofactor.

It carries out the reaction acetone + hydrogencarbonate + 2 ATP + 3 H2O = acetoacetate + 2 AMP + 4 phosphate + 4 H(+). Functionally, catalyzes the carboxylation of acetone to form acetoacetate. Has a reduced activity on butanone, and no activity on 2-pentatone, 3-pentatone, 2-hexanone, chloroacetone, pyruvate, phosphoenolpyruvate, acetaldehyde, propionaldehyde and propylene oxide. The protein is Acetone carboxylase gamma subunit of Xanthobacter autotrophicus (strain ATCC BAA-1158 / Py2).